The chain runs to 428 residues: Succinyl-CoA--L-malate CoA-transferase alpha subunit (428 aa).

A disordered region spans residues 1–31; sequence MPPTGEEPSGHAESKPPASDPMSTPGTGQEQ. Positions 21–31 are enriched in polar residues; the sequence is PMSTPGTGQEQ. Catalysis depends on Asp-200, which acts as the Nucleophile.

It belongs to the CoA-transferase III family. As to quaternary structure, forms a large complex composed of six heterodimers (alpha, beta).

It carries out the reaction succinyl-CoA + (S)-malate = (S)-malyl-CoA + succinate. The catalysed reaction is (3S)-citramalate + succinyl-CoA = (3S)-citramalyl-CoA + succinate. Its function is as follows. Involved in the 3-hydroxypropionate cycle used for autotrophic carbon dioxide fixation. Catalyzes the transfer of CoA moiety from succinyl-CoA to L-malate to yield L-malyl-CoA. It is highly specific for succinyl-CoA as the CoA donor, however it can accept L-citramalate instead of L-malate as the CoA acceptor. The sequence is that of Succinyl-CoA--L-malate CoA-transferase alpha subunit (smtA) from Chloroflexus aurantiacus.